The following is a 178-amino-acid chain: Signaling threshold-regulating transmembrane adapter 1 (178 aa).

Residues 1–23 (MSRENNCTTADLAWGIPSITQAW) are Extracellular-facing. N-linked (GlcNAc...) asparagine glycosylation is present at N6. A helical; Signal-anchor for type III membrane protein membrane pass occupies residues 24 to 44 (GLWALFGVVTMLLLISLAALL). Residues 45 to 178 (SQWTRGRRRT…AYANSQPAPS (134 aa)) lie on the Cytoplasmic side of the membrane. 2 positions are modified to phosphoserine: S62 and S65. The residue at position 72 (Y72) is a Phosphotyrosine. An interaction with GRB2 region spans residues 72–75 (YGNL). A disordered region spans residues 81-102 (GRLSEESRSEEQDPSSGGLARG). Phosphoserine occurs at positions 84, 87, and 89. Y109 carries the post-translational modification Phosphotyrosine. Phosphothreonine is present on T126. Positions 128-133 (IKYCEV) are interaction with PTPN11. 2 positions are modified to phosphotyrosine: Y130 and Y151. The interaction with CSK stretch occupies residues 151 to 154 (YASV). The residue at position 164 (S164) is a Phosphoserine. Residue Y170 is modified to Phosphotyrosine. Positions 170–173 (YANS) are interaction with GRB2.

Homodimer; disulfide-linked. When phosphorylated, interacts with PTPN11/SHP2, GRB2 and CSK. Phosphorylated on tyrosines upon TCR activation; which promotes recruitment of PTPN11, GRB2 and CSK. In terms of tissue distribution, lymph node, spleen and thymus.

The protein resides in the cell membrane. Functionally, negatively regulates T-cell antigen receptor (TCR)-mediated signaling. Involved in positive selection of T-cells. This Rattus norvegicus (Rat) protein is Signaling threshold-regulating transmembrane adapter 1 (Sit1).